Reading from the N-terminus, the 160-residue chain is Large ribosomal subunit protein uL15 (160 aa).

Positions 1 to 13 (MKLNEIRDNEGAR) are enriched in basic and acidic residues. The tract at residues 1–41 (MKLNEIRDNEGARKSRIRVGRGIGSGKGKTGGRGVKGQKSR) is disordered. Over residues 21 to 35 (RGIGSGKGKTGGRGV) the composition is skewed to gly residues.

It belongs to the universal ribosomal protein uL15 family. In terms of assembly, part of the 50S ribosomal subunit.

Functionally, binds to the 23S rRNA. This Parvibaculum lavamentivorans (strain DS-1 / DSM 13023 / NCIMB 13966) protein is Large ribosomal subunit protein uL15.